The following is a 638-amino-acid chain: MLLAQINRDSQGMTEFPGGGMEAQHVTLCLTEAVTVADGDNLENMEGVSLQAVTLADGSTAYIQHNSKDGRLIDGQVIQLEDGSAAYVQHVPIPKSTGDSLRLEDGQAVQLEDGTTAFIHHTSKDSYDQSSLQAVQLEDGTTAYIHHAVQVPQPDTILAIQADGTVAGLHTGDATIDPDTISALEQYAAKVSIDGSEGVTSTGLIGENEQEKKMQIVLQGHATRVTPKSQQSGEKAFRCKYDGCGKLYTTAHHLKVHERSHTGDRPYQCEHSGCGKAFATGYGLKSHFRTHTGEKPYRCSEDNCTKSFKTSGDLQKHIRTHTGERPFKCPIEGCGRSFTTSNIRKVHIRTHTGERPYYCTEPGCGRAFASATNYKNHVRIHTGEKPYVCTVPGCDKRFTEYSSLYKHHVVHTHSKPYNCNHCGKTYKQISTLAMHKRTAHNDTEPIEEEQEAFFEPPPGQGDDVLKGSQITYVTGVEGEDIVSTQVATVTQSGLSQQVTLISQDGTQHVNISQADMQAIGNTITMVTQDGTPITVPTHDAVISSAGTHSVAMVTAEGTEGQQVAIVAQDLAAFHAASSEMGHQPHSHHLVTTETRPLTLVATSNGTQIAVQLGEQPSLEEAIRIASRIQQGETPGLDD.

Methionine 1 is modified (N-acetylmethionine). Lysine 213 is covalently cross-linked (Glycyl lysine isopeptide (Lys-Gly) (interchain with G-Cter in SUMO2)). C2H2-type zinc fingers lie at residues 237-261 (FRCK…ERSH), 267-291 (YQCE…FRTH), 297-321 (YRCS…IRTH), and 327-351 (FKCP…IRTH). Threonine 352 is modified (phosphothreonine). 3 C2H2-type zinc fingers span residues 357–381 (YYCT…VRIH), 387–411 (YVCT…HVVH), and 417–440 (YNCN…RTAH). Lysine 406 is covalently cross-linked (Glycyl lysine isopeptide (Lys-Gly) (interchain with G-Cter in SUMO2)).

This sequence belongs to the GLI C2H2-type zinc-finger protein family. Interacts with CHD8. Forms a complex with HCFC1 and ZNF143.

The protein resides in the nucleus. In terms of biological role, transcriptional activator. In complex with HCFC1 and ZNF143, regulates the expression of several genes, including AP2S1, ESCO2, OPHN1, RBL1, UBXN8 and ZNF32. Activates the gene for selenocysteine tRNA (tRNAsec). Binds to the SPH motif of small nuclear RNA (snRNA) gene promoters. Participates in efficient U6 RNA polymerase III transcription via its interaction with CHD8. This is Zinc finger protein 143 (Znf143) from Rattus norvegicus (Rat).